We begin with the raw amino-acid sequence, 593 residues long: NADH-quinone oxidoreductase subunit C/D (593 aa).

The segment at 1–184 (MTTGSALYIP…DPFSLNLAKQ (184 aa)) is NADH dehydrogenase I subunit C. The NADH dehydrogenase I subunit D stretch occupies residues 208–593 (DYMFLNLGPN…IDFVMADVDR (386 aa)).

The protein in the N-terminal section; belongs to the complex I 30 kDa subunit family. This sequence in the C-terminal section; belongs to the complex I 49 kDa subunit family. As to quaternary structure, NDH-1 is composed of 13 different subunits. Subunits NuoB, CD, E, F, and G constitute the peripheral sector of the complex.

It is found in the cell inner membrane. It carries out the reaction a quinone + NADH + 5 H(+)(in) = a quinol + NAD(+) + 4 H(+)(out). NDH-1 shuttles electrons from NADH, via FMN and iron-sulfur (Fe-S) centers, to quinones in the respiratory chain. The immediate electron acceptor for the enzyme in this species is believed to be ubiquinone. Couples the redox reaction to proton translocation (for every two electrons transferred, four hydrogen ions are translocated across the cytoplasmic membrane), and thus conserves the redox energy in a proton gradient. This is NADH-quinone oxidoreductase subunit C/D from Pseudomonas fluorescens (strain ATCC BAA-477 / NRRL B-23932 / Pf-5).